The following is a 949-amino-acid chain: Piwi-like protein 2 (949 aa).

Residues 1-125 (MDPTRPPFRG…SLSTRVQQAS (125 aa)) are disordered. Residues 115–125 (PSLSTRVQQAS) are compositionally biased toward polar residues. The PAZ domain maps to 366–478 (SVLDIMNILY…LLPELAFMTG (113 aa)). One can recognise a Piwi domain in the interval 644–935 (LLVCLISGTR…LAFLSGQFLH (292 aa)). Active-site residues include aspartate 721, glutamate 759, aspartate 791, and histidine 924.

It belongs to the argonaute family. Piwi subfamily. As to quaternary structure, component of the PET complex. The cofactor is Mg(2+). Post-translationally, methylated on arginine residues; required for the interaction with Tudor domain-containing protein and subsequent localization to the meiotic nuage, also named P granule. In terms of tissue distribution, expressed in oocytes, testis and liver (at protein level).

The protein resides in the cytoplasm. Its subcellular location is the nucleus. Functionally, endoribonuclease that plays a central role during spermatogenesis by repressing transposable elements and preventing their mobilization, which is essential for the germline integrity. Plays an essential role in meiotic differentiation of spermatocytes, germ cell differentiation and in self-renewal of spermatogonial stem cells. Acts via the piRNA metabolic process, which mediates the repression of transposable elements during meiosis by forming complexes composed of piRNAs and Piwi proteins and govern the methylation and subsequent repression of transposons. During piRNA biosynthesis, plays a key role in the piRNA amplification loop, also named ping-pong amplification cycle, by acting as a 'slicer-competent' piRNA endoribonuclease that cleaves primary piRNAs, which are then loaded onto 'slicer-incompetent' piwil4. Piwil2 slicing produces a pre-miRNA intermediate, which is then processed in mature piRNAs, and as well as a 16 nucleotide by-product that is degraded. Required for piwil4/miwi2 nuclear localization and association with secondary piRNAs antisense. Represses circadian rhythms by promoting the stability and activity of core clock components BMAL1 and CLOCK. In Xenopus tropicalis (Western clawed frog), this protein is Piwi-like protein 2 (piwil2).